Reading from the N-terminus, the 516-residue chain is MNSGGEEPTIKPNVFNITQLLNSNGEKPGIACIFLSKFDMKKGNIIIWSKSINGAAIDLSNIEFKSLPAGIHEQTDDVVNFVVPKELDVCQTAKTTTYDYGIAYFKQNSFDIIENDNRIDRSKVQMFSLGVIIDVQNASSDSKKHFYKEIYHAYAANRYSSYLESLLGQWIRQRDLDKFDIFEKFFDENNQGHMAENSVEVFEHSPKERRHLVEYLPYWTRKLGPLIFPLWKASLLQSRILILVPQGESFELCNSLAYCVFLISMLPKNLIGNHVSDEYIKPIFTVSTSDIPFLESFKKGNGYVATTSEEILLYKPEIYDIVVKLTSSSTIEESPEKEVEILTASGEQNKATPLDLEVYEKLILGELQEDASTNATCRHHEVTEPISWLQFLIDGFFLLTTAGYLVAPYHLANNFKIPRHVSGPEPNNSEIQIAENLVRYFHRRTSNLYNDLKDVIQKSENIDSEQPITIAASFLTKLNLDCFSKQDHQFVKDIALKWFQRSIDISNLPECLGNLC.

Residues 31–185 form the uDENN domain; that stretch reads ACIFLSKFDM…LDKFDIFEKF (155 aa). The 155-residue stretch at 211–365 folds into the cDENN domain; sequence HLVEYLPYWT…LEVYEKLILG (155 aa). One can recognise a dDENN domain in the interval 367–513; sequence LQEDASTNAT…DISNLPECLG (147 aa). Residues C511 and C516 are each lipidated (S-palmitoyl cysteine).

In terms of processing, palmitoylated by AKR1.

The protein resides in the lipid droplet. May be involved in lipid metabolism. This is an uncharacterized protein from Saccharomyces cerevisiae (strain ATCC 204508 / S288c) (Baker's yeast).